Reading from the N-terminus, the 686-residue chain is Probable metal-nicotianamine transporter YSL10 (686 aa).

14 helical membrane passes run 36 to 56 (VTLR…VIVM), 60 to 80 (LTTG…FFLL), 109 to 129 (CVVA…IFAM), 151 to 171 (LGWM…SVVP), 212 to 232 (MLGK…FYTG), 271 to 291 (LVNI…WPLI), 316 to 336 (VFIS…KVMT), 383 to 403 (IPNW…IATV), 415 to 435 (VAVS…GCGL), 461 to 481 (GGII…STAS), 501 to 521 (FVSQ…VFWL), 556 to 576 (GSLP…AIAV), 597 to 617 (MAIP…GSLI), and 639 to 659 (GLIC…LAGV).

This sequence belongs to the YSL (TC 2.A.67.2) family.

It localises to the membrane. Functionally, may be involved in the transport of nicotianamine-chelated metals. The protein is Probable metal-nicotianamine transporter YSL10 (YSL10) of Oryza sativa subsp. japonica (Rice).